A 908-amino-acid polypeptide reads, in one-letter code: Mechanosensitive ion channel protein 8 (908 aa).

A compositionally biased stretch (polar residues) spans 1–25 (MDFRNSFKSHSSYKQIRSPGDQSEP). 4 disordered regions span residues 1–88 (MDFR…HTAV), 148–172 (DQEN…SFDA), 190–221 (VAGS…LQEE), and 242–265 (VKTR…WRSG). Over residues 31 to 70 (PILHDHHPDHSGMVVDDQKPDSTRSSLDDGRNAPVERDAS) the composition is skewed to basic and acidic residues. 2 stretches are compositionally biased toward polar residues: residues 75–85 (QDNTTGTSTDH) and 156–171 (HQTM…TSFD). The span at 196–206 (SSSSHSSSSSS) shows a compositional bias: low complexity. Over residues 207–218 (ATMRTNQDQPQL) the composition is skewed to polar residues. Residues 247–256 (RLQDPPREEE) are compositionally biased toward basic and acidic residues. Transmembrane regions (helical) follow at residues 298-318 (AITL…ACSL), 341-361 (LVLI…VFFI), 381-401 (AVQN…LFDK), 411-431 (FLPY…LWLI), 673-693 (MINI…LEIA), and 709-729 (AFIF…LFIV).

Belongs to the MscS (TC 1.A.23) family. As to expression, expressed in tricellular and mature pollen, and in germinating tube. Not detected in leaves or roots.

It localises to the cell membrane. The protein resides in the endomembrane system. Not regulated by MgCl(2), ruthenium red or tetramethylammonium-Cl. Functionally, mechanosensitive channel that opens in response to stretch forces in the membrane lipid bilayer. Exhibits a 6.3-fold preference for chloride over sodium. Regulates osmotic forces during pollen hydration and germination. This chain is Mechanosensitive ion channel protein 8, found in Arabidopsis thaliana (Mouse-ear cress).